The following is a 564-amino-acid chain: Mitochondrial distribution and morphology protein 34-1 (564 aa).

The SMP-LTD domain occupies 1-195 (MAFKFNWSPL…LPAIIHRLSL (195 aa)). Polar residues-rich tracts occupy residues 297 to 322 (PDQN…SQTG) and 329 to 352 (DNAS…SSYG). 3 disordered regions span residues 297–408 (PDQN…VTSA), 414–433 (HEQP…DQSL), and 452–473 (DLSS…PFNT). Residues 359 to 371 (RHSRAHARRRKKR) are compositionally biased toward basic residues. Low complexity predominate over residues 383–394 (SDSASVSVSDES). The segment covering 396–408 (YTESASAPSVTSA) has biased composition (polar residues). Basic and acidic residues predominate over residues 452-466 (DLSSEIVRDRAEPSE).

It belongs to the MDM34 family. As to quaternary structure, component of the ER-mitochondria encounter structure (ERMES) or MDM complex, composed of mmm1, mdm10, mdm12 and mdm34.

The protein resides in the mitochondrion outer membrane. Its function is as follows. Component of the ERMES/MDM complex, which serves as a molecular tether to connect the endoplasmic reticulum (ER) and mitochondria. Components of this complex are involved in the control of mitochondrial shape and protein biogenesis, and function in nonvesicular lipid trafficking between the ER and mitochondria. Mdm34 is required for the interaction of the ER-resident membrane protein mmm1 and the outer mitochondrial membrane-resident beta-barrel protein mdm10. This is Mitochondrial distribution and morphology protein 34-1 from Penicillium rubens (strain ATCC 28089 / DSM 1075 / NRRL 1951 / Wisconsin 54-1255) (Penicillium chrysogenum).